The chain runs to 471 residues: UDP-N-acetylmuramate--L-alanine ligase (471 aa).

114–120 is a binding site for ATP; sequence GTHGKTT.

The protein belongs to the MurCDEF family.

It is found in the cytoplasm. The catalysed reaction is UDP-N-acetyl-alpha-D-muramate + L-alanine + ATP = UDP-N-acetyl-alpha-D-muramoyl-L-alanine + ADP + phosphate + H(+). It functions in the pathway cell wall biogenesis; peptidoglycan biosynthesis. In terms of biological role, cell wall formation. In Methylobacterium nodulans (strain LMG 21967 / CNCM I-2342 / ORS 2060), this protein is UDP-N-acetylmuramate--L-alanine ligase.